The following is a 501-amino-acid chain: MSSSAMPDVPAPLTNLQFKYTKIFINNEWHSSVSGKKFPVFNPATEEKLCEVEEGDKEDVDKAVKAARQAFQIGSPWRTMDASERGRLLNKLADLIERDRLLLATMEAMNGGKLFSNAYLMDLGGCIKTLRYCAGWADKIQGRTIPMDGNFFTYTRSEPVGVCGQIIPWNFPLLMFLWKIGPALSCGNTVVVKPAEQTPLTALHMGSLIKEAGFPPGVVNIVPGYGPTAGAAISSHMDVDKVAFTGSTEVGKLIKEAAGKSNLKRVSLELGGKSPCIVFADADLDNAVEFAHQGVFYHQGQCCIAASRLFVEESIYDEFVRRSVERAKKYVLGNPLTPGVSQGPQIDKEQYEKILDLIESGKKEGAKLECGGGPWGNKGYFIQPTVFSDVTDDMRIAKEEIFGPVQQIMKFKSLDDVIKRANNTFYGLSAGIFTNDIDKAITVSSALQSGTVWVNCYSVVSAQCPFGGFKMSGNGRELGEYGFHEYTEVKTVTIKISQKNS.

Ser-2 carries the N-acetylserine modification. N6-acetyllysine is present on residues Lys-91 and Lys-128. NAD(+) contacts are provided by residues 167-170, 193-196, 226-227, and 246-247; these read IPWN, KPAE, GP, and GS. Lys-252 bears the N6-acetyllysine mark. Glu-269 functions as the Proton acceptor in the catalytic mechanism. 269 to 271 contributes to the NAD(+) binding site; the sequence is ELG. Residue Cys-303 is the Nucleophile of the active site. The segment at 336 to 501 is mediates interaction with PRMT3; sequence LTPGVSQGPQ…VTIKISQKNS (166 aa). The residue at position 337 (Thr-337) is a Phosphothreonine. Residue 349–353 participates in NAD(+) binding; the sequence is EQYEK. Residues Lys-353 and Lys-367 each carry the N6-acetyllysine modification. An NAD(+)-binding site is contributed by 400–402; that stretch reads EIF. N6-acetyllysine is present on Lys-410. Ser-413 bears the Phosphoserine mark. N6-acetyllysine is present on residues Lys-419 and Lys-495.

The protein belongs to the aldehyde dehydrogenase family. Homotetramer. Interacts with PRMT3; the interaction is direct, inhibits ALDH1A1 aldehyde dehydrogenase activity and is independent of the methyltransferase activity of PRMT3. In terms of processing, the N-terminus is blocked most probably by acetylation.

The protein resides in the cytoplasm. It is found in the cytosol. The protein localises to the cell projection. Its subcellular location is the axon. It catalyses the reaction an aldehyde + NAD(+) + H2O = a carboxylate + NADH + 2 H(+). The enzyme catalyses all-trans-retinal + NAD(+) + H2O = all-trans-retinoate + NADH + 2 H(+). It carries out the reaction 9-cis-retinal + NAD(+) + H2O = 9-cis-retinoate + NADH + 2 H(+). The catalysed reaction is 11-cis-retinal + NAD(+) + H2O = 11-cis-retinoate + NADH + 2 H(+). It catalyses the reaction 13-cis-retinal + NAD(+) + H2O = 13-cis-retinoate + NADH + 2 H(+). The enzyme catalyses 3-deoxyglucosone + NAD(+) + H2O = 2-dehydro-3-deoxy-D-gluconate + NADH + 2 H(+). It carries out the reaction (E)-4-hydroxynon-2-enal + NAD(+) + H2O = (E)-4-hydroxynon-2-enoate + NADH + 2 H(+). The catalysed reaction is malonaldehyde + NAD(+) + H2O = 3-oxopropanoate + NADH + 2 H(+). It catalyses the reaction hexanal + NAD(+) + H2O = hexanoate + NADH + 2 H(+). The enzyme catalyses propanal + NAD(+) + H2O = propanoate + NADH + 2 H(+). It carries out the reaction acetaldehyde + NAD(+) + H2O = acetate + NADH + 2 H(+). The catalysed reaction is benzaldehyde + NAD(+) + H2O = benzoate + NADH + 2 H(+). It catalyses the reaction 4-aminobutanal + NAD(+) + H2O = 4-aminobutanoate + NADH + 2 H(+). It participates in cofactor metabolism; retinol metabolism. Inhibited by duocarmycin analogs. Its function is as follows. Cytosolic dehydrogenase that catalyzes the irreversible oxidation of a wide range of aldehydes to their corresponding carboxylic acid. Functions downstream of retinol dehydrogenases and catalyzes the oxidation of retinaldehyde into retinoic acid, the second step in the oxidation of retinol/vitamin A into retinoic acid. This pathway is crucial to control the levels of retinol and retinoic acid, two important molecules which excess can be teratogenic and cytotoxic. Also oxidizes aldehydes resulting from lipid peroxidation like (E)-4-hydroxynon-2-enal/HNE, malonaldehyde and hexanal that form protein adducts and are highly cytotoxic. By participating for instance to the clearance of (E)-4-hydroxynon-2-enal/HNE in the lens epithelium prevents the formation of HNE-protein adducts and lens opacification. Also functions downstream of fructosamine-3-kinase in the fructosamine degradation pathway by catalyzing the oxidation of 3-deoxyglucosone, the carbohydrate product of fructosamine 3-phosphate decomposition, which is itself a potent glycating agent that may react with lysine and arginine side-chains of proteins. Also has an aminobutyraldehyde dehydrogenase activity and is probably part of an alternative pathway for the biosynthesis of GABA/4-aminobutanoate in midbrain, thereby playing a role in GABAergic synaptic transmission. The chain is Aldehyde dehydrogenase 1A1 from Ovis aries (Sheep).